The following is a 213-amino-acid chain: Na(+)-translocating NADH-quinone reductase subunit E (213 aa).

Helical transmembrane passes span 12-32 (AVFV…FLAV), 40-60 (IGLG…NQLI), 92-112 (FLGF…LEMF), 124-144 (LGIF…SLFM), 155-175 (VVFG…LAGI), and 191-211 (LGIT…FSGI).

It belongs to the NqrDE/RnfAE family. In terms of assembly, composed of six subunits; NqrA, NqrB, NqrC, NqrD, NqrE and NqrF.

The protein localises to the cell inner membrane. The catalysed reaction is a ubiquinone + n Na(+)(in) + NADH + H(+) = a ubiquinol + n Na(+)(out) + NAD(+). NQR complex catalyzes the reduction of ubiquinone-1 to ubiquinol by two successive reactions, coupled with the transport of Na(+) ions from the cytoplasm to the periplasm. NqrA to NqrE are probably involved in the second step, the conversion of ubisemiquinone to ubiquinol. The sequence is that of Na(+)-translocating NADH-quinone reductase subunit E from Rhodopirellula baltica (strain DSM 10527 / NCIMB 13988 / SH1).